The sequence spans 407 residues: O-methyltransferase verK (407 aa).

S-adenosyl-L-methionine-binding positions include Glu-263 and 295–297; that span reads GDF. His-314 acts as the Proton acceptor in catalysis.

It belongs to the class I-like SAM-binding methyltransferase superfamily. Cation-independent O-methyltransferase family.

It participates in mycotoxin biosynthesis. In terms of biological role, O-methyltransferase; part of the gene cluster that mediates the biosynthesis of 11'-deoxyverticillin A, one of the dimeric epipolythiodioxopiperazines (ETPs) from the verticillin family that act as mycotoxins. 11'-deoxyverticillin A is required for normal conidiation. The nonribosomal peptide synthetase verP is speculated to be responsible for condensation of amino acids to form the carbon skeleton of verticillin, whereas the cluster-specific tailoring enzymes are involved in further modifications leading to the production of 11'-deoxyverticillin A. The polypeptide is O-methyltransferase verK (Clonostachys rogersoniana).